Here is a 104-residue protein sequence, read N- to C-terminus: ATP-dependent Clp protease adapter protein ClpS (104 aa).

Belongs to the ClpS family. In terms of assembly, binds to the N-terminal domain of the chaperone ClpA.

In terms of biological role, involved in the modulation of the specificity of the ClpAP-mediated ATP-dependent protein degradation. This is ATP-dependent Clp protease adapter protein ClpS from Hydrogenovibrio crunogenus (strain DSM 25203 / XCL-2) (Thiomicrospira crunogena).